The following is a 418-amino-acid chain: uncharacterized protein (418 aa).

This is an uncharacterized protein from Escherichia coli O157:H7.